The primary structure comprises 129 residues: Cytochrome b5 (129 aa).

Positions 8–84 (TTIYTHEEVA…LEKLYIGNLK (77 aa)) constitute a Cytochrome b5 heme-binding domain. Residues His43 and His67 each contribute to the heme site. The helical transmembrane segment at 104–124 (GINFPLIAVGVFLAAFGVYYY) threads the bilayer.

The protein belongs to the cytochrome b5 family.

The protein resides in the endoplasmic reticulum membrane. The protein localises to the microsome membrane. Functionally, membrane bound hemoprotein which function as an electron carrier for several membrane bound oxygenases. In Candida tropicalis (Yeast), this protein is Cytochrome b5 (Cytb5).